Reading from the N-terminus, the 233-residue chain is Uracil-DNA glycosylase (233 aa).

Residue Asp70 is the Proton acceptor of the active site.

Belongs to the uracil-DNA glycosylase (UDG) superfamily. UNG family.

The protein resides in the cytoplasm. It catalyses the reaction Hydrolyzes single-stranded DNA or mismatched double-stranded DNA and polynucleotides, releasing free uracil.. Its function is as follows. Excises uracil residues from the DNA which can arise as a result of misincorporation of dUMP residues by DNA polymerase or due to deamination of cytosine. This Helicobacter pylori (strain G27) protein is Uracil-DNA glycosylase.